Consider the following 565-residue polypeptide: Oxygen-dependent choline dehydrogenase (565 aa).

7 to 36 (DYIICGAGSAGNVLATRLTEDPGVTVLLLE) serves as a coordination point for FAD. His474 serves as the catalytic Proton acceptor.

The protein belongs to the GMC oxidoreductase family. The cofactor is FAD.

It carries out the reaction choline + A = betaine aldehyde + AH2. It catalyses the reaction betaine aldehyde + NAD(+) + H2O = glycine betaine + NADH + 2 H(+). The protein operates within amine and polyamine biosynthesis; betaine biosynthesis via choline pathway; betaine aldehyde from choline (cytochrome c reductase route): step 1/1. In terms of biological role, involved in the biosynthesis of the osmoprotectant glycine betaine. Catalyzes the oxidation of choline to betaine aldehyde and betaine aldehyde to glycine betaine at the same rate. In Burkholderia mallei (strain ATCC 23344), this protein is Oxygen-dependent choline dehydrogenase.